The primary structure comprises 431 residues: Enolase (431 aa).

Q167 contributes to the (2R)-2-phosphoglycerate binding site. E209 acts as the Proton donor in catalysis. D246, E289, and D316 together coordinate Mg(2+). Residues K341, R370, S371, and K392 each coordinate (2R)-2-phosphoglycerate. K341 functions as the Proton acceptor in the catalytic mechanism.

It belongs to the enolase family. As to quaternary structure, component of the RNA degradosome, a multiprotein complex involved in RNA processing and mRNA degradation. Mg(2+) serves as cofactor.

The protein resides in the cytoplasm. It localises to the secreted. It is found in the cell surface. It carries out the reaction (2R)-2-phosphoglycerate = phosphoenolpyruvate + H2O. Its pathway is carbohydrate degradation; glycolysis; pyruvate from D-glyceraldehyde 3-phosphate: step 4/5. In terms of biological role, catalyzes the reversible conversion of 2-phosphoglycerate (2-PG) into phosphoenolpyruvate (PEP). It is essential for the degradation of carbohydrates via glycolysis. The chain is Enolase from Shewanella oneidensis (strain ATCC 700550 / JCM 31522 / CIP 106686 / LMG 19005 / NCIMB 14063 / MR-1).